A 218-amino-acid polypeptide reads, in one-letter code: MGQKVHPEGFRLGVRRKGEKVDFKSQWYSDRDFAELLGEDLKIREHIERKLARAGIAEIEIKKAAEQGEVVVDIHTARPGIVIGKGGSEVDALRRDLERLTSKKVQVNVREVSRPELNAKLVAESIAEQLEGRAAFRRTMKRALTSAMRSGAVGARIQCSGRLGGIEMSRSETVSEGKVPLHTLDADIDYGFKEANTQMGQIGVKVWINHGIHTDEER.

The region spanning 43 to 113 (IREHIERKLA…KVQVNVREVS (71 aa)) is the KH type-2 domain.

This sequence belongs to the universal ribosomal protein uS3 family. In terms of assembly, part of the 30S ribosomal subunit. Forms a tight complex with proteins S10 and S14.

Binds the lower part of the 30S subunit head. Binds mRNA in the 70S ribosome, positioning it for translation. This chain is Small ribosomal subunit protein uS3, found in Rubrobacter xylanophilus (strain DSM 9941 / JCM 11954 / NBRC 16129 / PRD-1).